We begin with the raw amino-acid sequence, 510 residues long: NAD(P)H-quinone oxidoreductase subunit 2 B, chloroplastic (510 aa).

A run of 13 helical transmembrane segments spans residues 24-44 (LLLFHGSFILPECILIFGLIL), 57-77 (IPWLYFISSTSLVMSITALLF), 99-119 (IFQFLILLCSTLCIPLSVEYI), 124-144 (MAITEFLLFVLTATLGGMFLC), 150-170 (ITIFVAPECFSLCSYLLSGYT), 183-203 (YLLMGGASSSILVHGFSWLYG), 229-249 (ISIALIFITVGIGFKLSPAPF), 295-315 (WHLLLEILAILSMILGNLVAI), 323-343 (MLAYSSIGQIGYVIIGIIVGD), 347-367 (GYASMITYMLFYISMNLGTFA), 395-415 (ALSSALCLLSLGGLPPLAGFF), 418-438 (LHLFWCGWQAGLYFLVSIGLL), and 484-504 (MIVCVIASTIPGISMNPIIAI).

This sequence belongs to the complex I subunit 2 family. As to quaternary structure, NDH is composed of at least 16 different subunits, 5 of which are encoded in the nucleus.

Its subcellular location is the plastid. It localises to the chloroplast thylakoid membrane. It carries out the reaction a plastoquinone + NADH + (n+1) H(+)(in) = a plastoquinol + NAD(+) + n H(+)(out). The enzyme catalyses a plastoquinone + NADPH + (n+1) H(+)(in) = a plastoquinol + NADP(+) + n H(+)(out). In terms of biological role, NDH shuttles electrons from NAD(P)H:plastoquinone, via FMN and iron-sulfur (Fe-S) centers, to quinones in the photosynthetic chain and possibly in a chloroplast respiratory chain. The immediate electron acceptor for the enzyme in this species is believed to be plastoquinone. Couples the redox reaction to proton translocation, and thus conserves the redox energy in a proton gradient. The polypeptide is NAD(P)H-quinone oxidoreductase subunit 2 B, chloroplastic (Ceratophyllum demersum (Rigid hornwort)).